Consider the following 456-residue polypeptide: Glycerol-3-phosphate acyltransferase 4 (456 aa).

The first 37 residues, 1–37 (MFLLLPFDSLIVNLLGISLTVLFTLLLVFIIVPAIFG), serve as a signal peptide directing secretion. 2 consecutive transmembrane segments (helical) span residues 156–176 (ISLR…CFLL) and 180–200 (IALA…VGYL). N-linked (GlcNAc...) asparagine glycosylation is present at Asn247. The HXXXXD motif signature appears at 248 to 253 (HTSPID). Asn327, Asn328, and Asn362 each carry an N-linked (GlcNAc...) asparagine glycan.

This sequence belongs to the 1-acyl-sn-glycerol-3-phosphate acyltransferase family. In terms of tissue distribution, highly expressed in testis.

The protein resides in the endoplasmic reticulum membrane. It carries out the reaction sn-glycerol 3-phosphate + an acyl-CoA = a 1-acyl-sn-glycero-3-phosphate + CoA. It catalyses the reaction dodecanoyl-CoA + sn-glycerol 3-phosphate = 1-dodecanoyl-sn-glycerol 3-phosphate + CoA. The catalysed reaction is sn-glycerol 3-phosphate + hexadecanoyl-CoA = 1-hexadecanoyl-sn-glycero-3-phosphate + CoA. The enzyme catalyses sn-glycerol 3-phosphate + octadecanoyl-CoA = 1-octadecanoyl-sn-glycero-3-phosphate + CoA. It carries out the reaction sn-glycerol 3-phosphate + (9Z)-octadecenoyl-CoA = 1-(9Z-octadecenoyl)-sn-glycero-3-phosphate + CoA. It catalyses the reaction (9Z,12Z)-octadecadienoyl-CoA + sn-glycerol 3-phosphate = 1-(9Z,12Z)-octadecadienoyl-sn-glycero-3-phosphate + CoA. It participates in phospholipid metabolism; CDP-diacylglycerol biosynthesis; CDP-diacylglycerol from sn-glycerol 3-phosphate: step 1/3. Functionally, converts glycerol-3-phosphate to 1-acyl-sn-glycerol-3-phosphate (lysophosphatidic acid or LPA) by incorporating an acyl moiety at the sn-1 position of the glycerol backbone. Active against both saturated and unsaturated long-chain fatty acyl-CoAs. Protects cells against lipotoxicity. This chain is Glycerol-3-phosphate acyltransferase 4, found in Mus musculus (Mouse).